A 355-amino-acid chain; its full sequence is Tetraacyldisaccharide 4'-kinase (355 aa).

64 to 71 contributes to the ATP binding site; sequence YVGGTGKT. The disordered stretch occupies residues 206–226; the sequence is NRAPQSSATPTAASGQGPRRA. Over residues 208–222 the composition is skewed to low complexity; it reads APQSSATPTAASGQG.

It belongs to the LpxK family.

The enzyme catalyses a lipid A disaccharide + ATP = a lipid IVA + ADP + H(+). It functions in the pathway glycolipid biosynthesis; lipid IV(A) biosynthesis; lipid IV(A) from (3R)-3-hydroxytetradecanoyl-[acyl-carrier-protein] and UDP-N-acetyl-alpha-D-glucosamine: step 6/6. Its function is as follows. Transfers the gamma-phosphate of ATP to the 4'-position of a tetraacyldisaccharide 1-phosphate intermediate (termed DS-1-P) to form tetraacyldisaccharide 1,4'-bis-phosphate (lipid IVA). The chain is Tetraacyldisaccharide 4'-kinase from Bordetella petrii (strain ATCC BAA-461 / DSM 12804 / CCUG 43448).